A 351-amino-acid polypeptide reads, in one-letter code: Histidinol-phosphate aminotransferase 1 (351 aa).

Position 210 is an N6-(pyridoxal phosphate)lysine (K210).

The protein belongs to the class-II pyridoxal-phosphate-dependent aminotransferase family. Histidinol-phosphate aminotransferase subfamily. In terms of assembly, homodimer. It depends on pyridoxal 5'-phosphate as a cofactor.

It carries out the reaction L-histidinol phosphate + 2-oxoglutarate = 3-(imidazol-4-yl)-2-oxopropyl phosphate + L-glutamate. The protein operates within amino-acid biosynthesis; L-histidine biosynthesis; L-histidine from 5-phospho-alpha-D-ribose 1-diphosphate: step 7/9. The sequence is that of Histidinol-phosphate aminotransferase 1 (hisC1) from Pseudomonas aeruginosa (strain ATCC 15692 / DSM 22644 / CIP 104116 / JCM 14847 / LMG 12228 / 1C / PRS 101 / PAO1).